A 127-amino-acid chain; its full sequence is UPF0325 protein VS_2356 (127 aa).

This sequence belongs to the UPF0325 family.

The chain is UPF0325 protein VS_2356 from Vibrio atlanticus (strain LGP32) (Vibrio splendidus (strain Mel32)).